A 637-amino-acid chain; its full sequence is PTS system mannitol-specific EIICBA component (637 aa).

Over 1–23 (MSSDIKIKVQSFGRFLSNMVMPN) the chain is Cytoplasmic. The PTS EIIC type-2 domain maps to 12–341 (FGRFLSNMVM…ILLKTSKVKE (330 aa)). Residues 24–45 (IGAFIAWGIITALFIPTGWLPN) form a helical membrane-spanning segment. Topologically, residues 46-49 (ETLA) are periplasmic. Residues 50–70 (KLVGPMITYLLPLLIGYTGGK) form a helical membrane-spanning segment. Residues 71-133 (LVGGERGGVV…SGFEMLVNNF (63 aa)) are Cytoplasmic-facing. Residues 134–155 (SAGIIGMILAILAFLGIGPIVE) form a helical membrane-spanning segment. Residues 156–164 (ALSKMLAAG) are Periplasmic-facing. The chain crosses the membrane as a helical span at residues 165–185 (VNFMVVHDMLPLASIFVEPAK). Topologically, residues 186-272 (ILFLNNAINH…VLMNPRLILA (87 aa)) are cytoplasmic. Residues 273-292 (VILGGMTGVFTLTILGGGLV) traverse the membrane as a helical segment. The Periplasmic portion of the chain corresponds to 293-312 (SPASPGSILAVLAMTPKGAY). Residues 313 to 334 (FANIAGVCAAMAVSFVVSAILL) form a helical membrane-spanning segment. Over 335 to 637 (KTSKVKEEDD…EVLELLAGRK (303 aa)) the chain is Cytoplasmic. The PTS EIIB type-2 domain occupies 378–473 (RKIIVACDAG…RLVAAQRHTA (96 aa)). Cys384 functions as the Phosphocysteine intermediate; for EIIB activity in the catalytic mechanism. A Phosphocysteine; by EIIA modification is found at Cys384. The PTS EIIA type-2 domain maps to 494-636 (FKLGAENIFL…DEVLELLAGR (143 aa)). His554 acts as the Tele-phosphohistidine intermediate; for EIIA activity in catalysis. His554 is modified (phosphohistidine; by HPr).

In terms of assembly, homodimer. In terms of processing, an intramolecular phosphotransfer takes places between His-554 and Cys-384.

It localises to the cell inner membrane. The enzyme catalyses D-mannitol(out) + N(pros)-phospho-L-histidyl-[protein] = D-mannitol 1-phosphate(in) + L-histidyl-[protein]. Functionally, the phosphoenolpyruvate-dependent sugar phosphotransferase system (sugar PTS), a major carbohydrate active transport system, catalyzes the phosphorylation of incoming sugar substrates concomitantly with their translocation across the cell membrane. This system is involved in D-mannitol transport. Also able to use D-mannonic acid. This chain is PTS system mannitol-specific EIICBA component, found in Escherichia coli (strain K12).